Reading from the N-terminus, the 655-residue chain is Tumor necrosis factor receptor superfamily member 21 (655 aa).

The N-terminal stretch at M1–A41 is a signal peptide. At Q42 to H349 the chain is on the extracellular side. TNFR-Cys repeat units lie at residues L50–C88, S90–C131, C133–R167, and Q170–C211. 9 disulfides stabilise this stretch: C67/C80, C70/C88, C91/C106, C109/C123, C113/C131, C133/C144, C150/C168, C171/C186, and C192/C211. A glycan (N-linked (GlcNAc...) asparagine) is linked at N82. N141 carries an N-linked (GlcNAc...) asparagine glycan. Disordered stretches follow at residues P222–H305 and E318–N339. Polar residues-rich tracts occupy residues V241–V262 and P276–Q302. N-linked (GlcNAc...) asparagine glycosylation is found at N252, N257, N278, and N289. Over residues A330–N339 the composition is skewed to basic residues. Residues L350–I370 form a helical membrane-spanning segment. C368 carries the S-palmitoyl cysteine lipid modification. The Cytoplasmic portion of the chain corresponds to R371–L655. Positions G415–M498 constitute a Death domain.

As to quaternary structure, associates with TRADD. Interacts with NGFR. Interacts with CASP8. Post-translationally, oxidized in response to reactive oxygen species (ROS), leading to endocytosis. As to expression, detected in spleen B-cells (at protein level). Ubiquitous. Highly expressed in adult spleen, thymus, testis, prostate, ovary, small intestine, colon, brain, lung and kidney, and in fetal brain, liver and lung. Detected at lower levels in adult peripheral blood leukocytes, lung, and in fetal muscle, heart, kidney, small intestine and skin. Detected in T-cells, B-cells and monocytes. In T-cells expression is highest in Th0 cells, intermediate in Th2 cells and lower in Th1 cells. Expressed at low levels in proliferating progenitors in the spinal cord, but is highly expressed by differentiating neurons within the spinal cord and adjacent dorsal root ganglia.

The protein resides in the cell membrane. Its function is as follows. Promotes apoptosis, possibly via a pathway that involves the activation of NF-kappa-B. Can also promote apoptosis mediated by BAX and by the release of cytochrome c from the mitochondria into the cytoplasm. Trophic-factor deprivation triggers the cleavage of surface APP by beta-secretase to release sAPP-beta which is further cleaved to release an N-terminal fragment of APP (N-APP). Negatively regulates oligodendrocyte survival, maturation and myelination. Plays a role in signaling cascades triggered by stimulation of T-cell receptors, in the adaptive immune response and in the regulation of T-cell differentiation and proliferation. Negatively regulates T-cell responses and the release of cytokines such as IL4, IL5, IL10, IL13 and IFNG by Th2 cells. Negatively regulates the production of IgG, IgM and IgM in response to antigens. May inhibit the activation of JNK in response to T-cell stimulation. Also acts as a regulator of pyroptosis: recruits CASP8 in response to reactive oxygen species (ROS) and subsequent oxidation, leading to activation of GSDMC. This chain is Tumor necrosis factor receptor superfamily member 21 (Tnfrsf21), found in Mus musculus (Mouse).